The sequence spans 433 residues: Casein kinase 1-like protein 5 (433 aa).

Residues 9 to 278 (FRLGRKIGSG…LKRLFRNLFI (270 aa)) form the Protein kinase domain. ATP is bound by residues 15-23 (IGSGSFGEI) and Lys-38. The Proton acceptor role is filled by Asp-128. The segment at 297–433 (QSQSGNPQPR…DDVEPQSKAL (137 aa)) is disordered. A compositionally biased stretch (basic and acidic residues) spans 342-359 (LKQKDKNGNDSAIAKDKL). A compositionally biased stretch (low complexity) spans 362-375 (GSLNLGRSEGSSSR). Ser-390 is modified (phosphoserine). Polar residues predominate over residues 407–423 (INNNAGDETAATPQSNG).

It belongs to the protein kinase superfamily. CK1 Ser/Thr protein kinase family. Casein kinase I subfamily. As to quaternary structure, monomer. Autophosphorylated.

Its subcellular location is the cytoplasm. It catalyses the reaction L-seryl-[protein] + ATP = O-phospho-L-seryl-[protein] + ADP + H(+). It carries out the reaction L-threonyl-[protein] + ATP = O-phospho-L-threonyl-[protein] + ADP + H(+). In terms of biological role, casein kinases are operationally defined by their preferential utilization of acidic proteins such as caseins as substrates. It can phosphorylate a large number of proteins. The sequence is that of Casein kinase 1-like protein 5 from Arabidopsis thaliana (Mouse-ear cress).